Reading from the N-terminus, the 191-residue chain is Phosphopantetheine adenylyltransferase (191 aa).

A substrate-binding site is contributed by serine 8. ATP is bound by residues 8 to 9 (SF) and histidine 16. The substrate site is built by lysine 40, threonine 72, and arginine 86. ATP-binding positions include 87–89 (GLR), glutamate 97, and 122–128 (YSFLSSS).

The protein belongs to the bacterial CoaD family. As to quaternary structure, homohexamer. Mg(2+) is required as a cofactor.

It is found in the cytoplasm. The enzyme catalyses (R)-4'-phosphopantetheine + ATP + H(+) = 3'-dephospho-CoA + diphosphate. It functions in the pathway cofactor biosynthesis; coenzyme A biosynthesis; CoA from (R)-pantothenate: step 4/5. Reversibly transfers an adenylyl group from ATP to 4'-phosphopantetheine, yielding dephospho-CoA (dPCoA) and pyrophosphate. The sequence is that of Phosphopantetheine adenylyltransferase from Nostoc sp. (strain PCC 7120 / SAG 25.82 / UTEX 2576).